Here is a 479-residue protein sequence, read N- to C-terminus: MSIPRLKSYLSMFAAVLMLGQVLSAQAEEALPDFTTLVEQASPAVVNISTKQKLPDRRIAAGQMPDLEGLPPMFREFFERNMPQQPRSPRGDRQREAQSLGSGFIISSDGYVLTNNHVVADADEIIVRLSDRSELQAKLVGTDPRTDVALLKVDGKNLPTVKLGDSEKLKVGEWVLAIGSPFGFDHSVTKGIVSAKGRTLPNDTYVPFIQTDVAINPGNSGGPLFNMNGEVVGINSQIFTRSGGFMGLSFAIPIDVAIDVSNQLKKDGKVSRGWLGVVIQEVNKDLAESFGLDKPAGALVAQVLEDGPAAKSGLQVGDVILSMNGQPIVMSADLPHLVGTLKAGAKAKLEIIRNGKRQNLDVTIGAMPDDDADIGTGTGADGSAERSSNRLGVSVSDLTAEQKKSLELKGGVVIKEVQDGPAAMIGLRPGDVISHLNNQAIASAKQFTEIAKDLPKNRSVSMRVLRQGRASFITFKLAE.

Positions 1-27 (MSIPRLKSYLSMFAAVLMLGQVLSAQA) are cleaved as a signal peptide. Active-site charge relay system residues include H117, D147, and S220. Residues 218-220 (GNS) and 275-279 (LGVVI) contribute to the substrate site. 2 consecutive PDZ domains span residues 264–355 (LKKD…IRNG) and 361–468 (DVTI…LRQG). The tract at residues 368 to 395 (PDDDADIGTGTGADGSAERSSNRLGVSV) is disordered.

It belongs to the peptidase S1C family.

Its subcellular location is the periplasm. It catalyses the reaction Acts on substrates that are at least partially unfolded. The cleavage site P1 residue is normally between a pair of hydrophobic residues, such as Val-|-Val.. Functionally, might be efficient in the degradation of transiently denatured and unfolded proteins which accumulate in the periplasm following stress conditions. The protein is Probable periplasmic serine endoprotease DegP-like of Pseudomonas putida (strain W619).